The sequence spans 509 residues: Cytochrome P450 monooxygenase alt3 (509 aa).

A helical transmembrane segment spans residues Ile25–Leu45. Residue Cys450 coordinates heme.

Belongs to the cytochrome P450 family. Requires heme as cofactor.

The protein localises to the membrane. It participates in secondary metabolite biosynthesis. In terms of biological role, cytochrome P450 monooxygenase; part of the gene cluster that mediates the biosynthesis of alternapyrone derivatives. Alternapyrone is a decaketide with octa-methylation from methionine on every C2 unit except the third unit. All the domains in the polyketide synthase alt5 are apparently involved in alternapyrone synthesis, that is, the 8 CMeT, 7 KR, 7 DH, and 4 ER reactions in the 9 KS-mediated condensation steps required for alternapyrone synthesis. the alternapyrone produced by alt5 might be intensively modified by cytochrome P450 monooxygenases alt1, alt2 and alt3 and FAD-dependent oxidoreductase alt4 present in the alt gene cluster. This is Cytochrome P450 monooxygenase alt3 from Alternaria solani.